Consider the following 426-residue polypeptide: Interferon regulatory factor 8 (426 aa).

Residues 7–114 (GRRLRQWLIE…EPYKVYRIVP (108 aa)) constitute a DNA-binding region (IRF tryptophan pentad repeat).

It belongs to the IRF family. As to quaternary structure, interacts (via C-terminus) with TRIM21 (via C-terminus). Interacts with the BATF-JUNB heterodimer. Interacts with BATF (via bZIP domain); the interaction is direct. Interacts with COPS2. Interacts with SPI1. Post-translationally, ubiquitinated. Ubiquitination by TRIM21 in macrophages, a process that is strongly increased upon interferon gamma stimulation, leds to the enhanced transcriptional activity of target cytokine genes. Ubiquitination leads to its degradation by the proteasome. In terms of processing, sumoylated with SUMO3. Desumoylated by SENP1. Predominantly expressed in lymphoid tissues.

Its subcellular location is the nucleus. It localises to the cytoplasm. In terms of biological role, transcription factor that specifically binds to the upstream regulatory region of type I interferon (IFN) and IFN-inducible MHC class I genes (the interferon consensus sequence (ICS)). Can both act as a transcriptional activator or repressor. Plays a negative regulatory role in cells of the immune system. Involved in CD8(+) dendritic cell differentiation by forming a complex with the BATF-JUNB heterodimer in immune cells, leading to recognition of AICE sequence (5'-TGAnTCA/GAAA-3'), an immune-specific regulatory element, followed by cooperative binding of BATF and IRF8 and activation of genes. Required for the development of plasmacytoid dendritic cells (pDCs), which produce most of the type I IFN in response to viral infection. Positively regulates macroautophagy in dendritic cells. Acts as a transcriptional repressor of osteoclast differentiation factors such as NFATC1 and EEIG1. The sequence is that of Interferon regulatory factor 8 from Homo sapiens (Human).